The sequence spans 206 residues: Oligoribonuclease (206 aa).

The 164-residue stretch at 20 to 183 (LVWLDMEMTG…ADIHESIDEL (164 aa)) folds into the Exonuclease domain. The active site involves Tyr141.

This sequence belongs to the oligoribonuclease family.

It is found in the cytoplasm. In terms of biological role, 3'-to-5' exoribonuclease specific for small oligoribonucleotides. The protein is Oligoribonuclease of Burkholderia cenocepacia (strain HI2424).